Here is a 423-residue protein sequence, read N- to C-terminus: Protein TylM3 (423 aa).

A compositionally biased stretch (low complexity) spans 1–21 (MNTAAGPTGTAAGGTTAPAAA). Disordered stretches follow at residues 1–26 (MNTA…DLSR) and 117–149 (GSAL…RDDP). Over residues 139–149 (RPPDREERDDP) the composition is skewed to basic and acidic residues.

It belongs to the cytochrome P450 family.

It participates in antibiotic biosynthesis; tylosin biosynthesis. Its function is as follows. Involved in the biosynthesis of the macrolide antibiotic tylosin derived from the polyketide lactone tylactone. TylM3 is required for the glycosylation of the 5-hydroxyl group of tylactone to yield 5-O-mycaminosytylactone. This is Protein TylM3 from Streptomyces fradiae (Streptomyces roseoflavus).